We begin with the raw amino-acid sequence, 143 residues long: Transcription antitermination protein NusB (143 aa).

The protein belongs to the NusB family.

In terms of biological role, involved in transcription antitermination. Required for transcription of ribosomal RNA (rRNA) genes. Binds specifically to the boxA antiterminator sequence of the ribosomal RNA (rrn) operons. In Dehalococcoides mccartyi (strain CBDB1), this protein is Transcription antitermination protein NusB.